A 120-amino-acid polypeptide reads, in one-letter code: NAD(P)H-quinone oxidoreductase subunit 3, chloroplastic (120 aa).

3 consecutive transmembrane segments (helical) span residues 9–29 (IFWA…LISG), 64–84 (MFAL…PWAM), and 88–108 (VLGV…IVGS).

This sequence belongs to the complex I subunit 3 family. NDH is composed of at least 16 different subunits, 5 of which are encoded in the nucleus.

Its subcellular location is the plastid. It is found in the chloroplast thylakoid membrane. The enzyme catalyses a plastoquinone + NADH + (n+1) H(+)(in) = a plastoquinol + NAD(+) + n H(+)(out). It carries out the reaction a plastoquinone + NADPH + (n+1) H(+)(in) = a plastoquinol + NADP(+) + n H(+)(out). Its function is as follows. NDH shuttles electrons from NAD(P)H:plastoquinone, via FMN and iron-sulfur (Fe-S) centers, to quinones in the photosynthetic chain and possibly in a chloroplast respiratory chain. The immediate electron acceptor for the enzyme in this species is believed to be plastoquinone. Couples the redox reaction to proton translocation, and thus conserves the redox energy in a proton gradient. This Acorus calamus var. americanus (American sweet flag) protein is NAD(P)H-quinone oxidoreductase subunit 3, chloroplastic.